A 171-amino-acid chain; its full sequence is 3-hydroxydecanoyl-[acyl-carrier-protein] dehydratase (171 aa).

His-70 is an active-site residue.

Belongs to the thioester dehydratase family. FabA subfamily. As to quaternary structure, homodimer.

It is found in the cytoplasm. It catalyses the reaction a (3R)-hydroxyacyl-[ACP] = a (2E)-enoyl-[ACP] + H2O. It carries out the reaction (3R)-hydroxydecanoyl-[ACP] = (2E)-decenoyl-[ACP] + H2O. The enzyme catalyses (2E)-decenoyl-[ACP] = (3Z)-decenoyl-[ACP]. It functions in the pathway lipid metabolism; fatty acid biosynthesis. Necessary for the introduction of cis unsaturation into fatty acids. Catalyzes the dehydration of (3R)-3-hydroxydecanoyl-ACP to E-(2)-decenoyl-ACP and then its isomerization to Z-(3)-decenoyl-ACP. Can catalyze the dehydratase reaction for beta-hydroxyacyl-ACPs with saturated chain lengths up to 16:0, being most active on intermediate chain length. The protein is 3-hydroxydecanoyl-[acyl-carrier-protein] dehydratase of Shewanella sp. (strain MR-4).